Here is a 510-residue protein sequence, read N- to C-terminus: Light-independent protochlorophyllide reductase subunit B (510 aa).

A [4Fe-4S] cluster-binding site is contributed by aspartate 36. Aspartate 296 acts as the Proton donor in catalysis. Substrate is bound at residue 431–432 (GM).

Belongs to the ChlB/BchB/BchZ family. Protochlorophyllide reductase is composed of three subunits; ChlL, ChlN and ChlB. Forms a heterotetramer of two ChlB and two ChlN subunits. It depends on [4Fe-4S] cluster as a cofactor.

It is found in the plastid. It localises to the chloroplast. It carries out the reaction chlorophyllide a + oxidized 2[4Fe-4S]-[ferredoxin] + 2 ADP + 2 phosphate = protochlorophyllide a + reduced 2[4Fe-4S]-[ferredoxin] + 2 ATP + 2 H2O. It participates in porphyrin-containing compound metabolism; chlorophyll biosynthesis (light-independent). Component of the dark-operative protochlorophyllide reductase (DPOR) that uses Mg-ATP and reduced ferredoxin to reduce ring D of protochlorophyllide (Pchlide) to form chlorophyllide a (Chlide). This reaction is light-independent. The NB-protein (ChlN-ChlB) is the catalytic component of the complex. This Angiopteris evecta (Mule's foot fern) protein is Light-independent protochlorophyllide reductase subunit B.